The primary structure comprises 551 residues: Putative transport protein CGSHiGG_02670 (551 aa).

The next 5 membrane-spanning stretches (helical) occupy residues 4–24, 28–48, 65–85, 95–115, and 157–177; these read IAITISLLALVAVIGLWIGHW, GVGLGIGGVLFGGIIVAHFTN, FGLILFVYTIGIQVGPGFFSS, AFAILIIVLGSIAVVLVHKIA, and VSYAMAYPFGICGILLAMWLI. 2 RCK C-terminal domains span residues 191–275 and 277–360; these read RFNA…IIGH and VDAP…VIGN. Helical transmembrane passes span 370-390, 402-424, 438-458, 463-483, 492-512, and 529-549; these read MLPVFIGIGLGVLVGSIPFYI, AGGPLVVALILARIGTIGKLYWF, IVLFLAVVGLKSGGSFFDTLV, LEWMGYGIFITFVPLIIVGTI, YLTICGLLAGSMTDPPALAFA, and VYPLVMFLRIMSPQLLAVLLW.

It belongs to the AAE transporter (TC 2.A.81) family. YidE subfamily.

The protein localises to the cell membrane. This is Putative transport protein CGSHiGG_02670 from Haemophilus influenzae (strain PittGG).